The primary structure comprises 506 residues: Protein MGF 505-9R (506 aa).

ANK repeat units follow at residues 54–83 (SIHK…NLKY), 253–283 (QVDT…EIVE), and 313–343 (FVKK…KINL).

Belongs to the asfivirus MGF 505 family.

Plays a role in virus cell tropism, and may be required for efficient virus replication in macrophages. In African swine fever virus (isolate Tick/Malawi/Lil 20-1/1983) (ASFV), this protein is Protein MGF 505-9R.